The following is a 217-amino-acid chain: Orotate phosphoribosyltransferase (217 aa).

Lysine 26 provides a ligand contact to 5-phospho-alpha-D-ribose 1-diphosphate. An orotate-binding site is contributed by 34–35 (FF). 5-phospho-alpha-D-ribose 1-diphosphate is bound by residues 72–73 (YK), arginine 99, lysine 100, lysine 103, histidine 105, and 124–132 (DDVITAGTA). Threonine 128 and arginine 156 together coordinate orotate.

This sequence belongs to the purine/pyrimidine phosphoribosyltransferase family. PyrE subfamily. In terms of assembly, homodimer. Mg(2+) is required as a cofactor.

It carries out the reaction orotidine 5'-phosphate + diphosphate = orotate + 5-phospho-alpha-D-ribose 1-diphosphate. It functions in the pathway pyrimidine metabolism; UMP biosynthesis via de novo pathway; UMP from orotate: step 1/2. In terms of biological role, catalyzes the transfer of a ribosyl phosphate group from 5-phosphoribose 1-diphosphate to orotate, leading to the formation of orotidine monophosphate (OMP). The polypeptide is Orotate phosphoribosyltransferase (Aeromonas salmonicida (strain A449)).